Here is a 363-residue protein sequence, read N- to C-terminus: 3-dehydroquinate synthase (363 aa).

NAD(+) is bound by residues 72–77 (SGEKEK), 130–131 (TT), lysine 142, and lysine 151. Positions 184, 247, and 264 each coordinate Zn(2+).

The protein belongs to the sugar phosphate cyclases superfamily. Dehydroquinate synthase family. Requires Co(2+) as cofactor. Zn(2+) is required as a cofactor. NAD(+) serves as cofactor.

Its subcellular location is the cytoplasm. The enzyme catalyses 7-phospho-2-dehydro-3-deoxy-D-arabino-heptonate = 3-dehydroquinate + phosphate. Its pathway is metabolic intermediate biosynthesis; chorismate biosynthesis; chorismate from D-erythrose 4-phosphate and phosphoenolpyruvate: step 2/7. Its function is as follows. Catalyzes the conversion of 3-deoxy-D-arabino-heptulosonate 7-phosphate (DAHP) to dehydroquinate (DHQ). The polypeptide is 3-dehydroquinate synthase (Bacillus thuringiensis (strain Al Hakam)).